The following is a 284-amino-acid chain: Nucleoid occlusion protein (284 aa).

The segment at residues 143 to 162 is a DNA-binding region (H-T-H motif); the sequence is EALAQRVGKSQSAIANKMRL.

Belongs to the ParB family.

Its subcellular location is the cytoplasm. The protein localises to the nucleoid. In terms of biological role, effects nucleoid occlusion by binding relatively nonspecifically to DNA and preventing the assembly of the division machinery in the vicinity of the nucleoid, especially under conditions that disturb the cell cycle. It helps to coordinate cell division and chromosome segregation by preventing the formation of the Z ring through the nucleoid, which would cause chromosome breakage. This Listeria monocytogenes serotype 4b (strain CLIP80459) protein is Nucleoid occlusion protein.